Reading from the N-terminus, the 182-residue chain is ATP-dependent protease subunit HslV (182 aa).

T12 is a catalytic residue. Residues A167, C170, and T173 each coordinate Na(+).

Belongs to the peptidase T1B family. HslV subfamily. As to quaternary structure, a double ring-shaped homohexamer of HslV is capped on each side by a ring-shaped HslU homohexamer. The assembly of the HslU/HslV complex is dependent on binding of ATP.

It is found in the cytoplasm. It catalyses the reaction ATP-dependent cleavage of peptide bonds with broad specificity.. Its activity is regulated as follows. Allosterically activated by HslU binding. Protease subunit of a proteasome-like degradation complex believed to be a general protein degrading machinery. This is ATP-dependent protease subunit HslV from Chlorobium luteolum (strain DSM 273 / BCRC 81028 / 2530) (Pelodictyon luteolum).